Consider the following 1693-residue polypeptide: Non-structural polyprotein pORF1 (1693 aa).

Residues 56–240 (VFRPEVFWNQ…HDVSNLRSWI (185 aa)) form the Alphavirus-like MT domain. The segment at 60-240 (EVFWNQPIQR…HDVSNLRSWI (181 aa)) is methyltransferase. The interval 241 to 439 (RTTKVTGDHP…FYAQCRRWLS (199 aa)) is Y-domain. An intrachain disulfide couples C434 to C481. A putative protease region spans residues 442 to 509 (FHLDPRVLVF…ESYEGSDVDP (68 aa)). The zinc-binding stretch occupies residues 510-691 (AESAISDISG…FSPGHVWESA (182 aa)). H671, E673, and H686 together coordinate Zn(2+). The interval 712–778 (SSPTRPDLGF…AITHQTARHR (67 aa)) is hinge. Positions 716-769 (RPDLGFMSEPPIPSRAATPTLAAPLPPLAPDPSPPSSAPALDEPASAATSGVPA) are disordered. Positions 739–752 (PLPPLAPDPSPPSS) are enriched in pro residues. The span at 753-763 (APALDEPASAA) shows a compositional bias: low complexity. A Macro domain is found at 775 to 921 (ARHRRLLFTY…LYLPELAARW (147 aa)). The segment at 785–942 (PDGSKVFAGS…TITEDAARTA (158 aa)) is X-domain. Positions 934 to 1082 (ITEDAARTAN…RPDLAPTSWW (149 aa)) constitute a (+)RNA virus helicase ATP-binding domain. An NTPase/helicase region spans residues 960–1204 (GCRVTPGVVQ…ISDAIVNNFF (245 aa)). 975–982 (GVPGSGKS) is an ATP binding site. The region spanning 1083-1216 (HVTHRCPADV…GGEIGHQRPS (134 aa)) is the (+)RNA virus helicase C-terminal domain. The segment at 1207 to 1693 (GGEIGHQRPS…LTNSILCRVE (487 aa)) is RNA-directed RNA polymerase. A RdRp catalytic domain is found at 1454 to 1565 (SMVFENDFSE…LCSEYRQSPG (112 aa)).

This sequence belongs to the hepevirus non-structural polyprotein family. In terms of assembly, the protease domain interacts with host EIF2AK4 (via C-terminus); this interaction inhibits dimerization of EIF2AK4 and prevents EIF2AK4-mediated phosphorylation of host EIF2A. Mg(2+) serves as cofactor. Post-translationally, ORF1 polyprotein does not seem to be processed into distinct enzymatic domains by a viral protease belonging to ORF1, but could be processed by a host serine protease like thrombin.

Its subcellular location is the host cytoplasm. The protein localises to the host perinuclear region. It catalyses the reaction RNA(n) + a ribonucleoside 5'-triphosphate = RNA(n+1) + diphosphate. The catalysed reaction is GTP + S-adenosyl-L-methionine = N(7)-methyl-GTP + S-adenosyl-L-homocysteine. Its activity is regulated as follows. Putative protease: Inhibited by chymostatin. Methyltransferase: Displays a capping enzyme activity. This function is necessary since all viral RNAs are synthesized in the cytoplasm, and host capping enzymes are restricted to the nucleus. The enzymatic reaction involves a covalent link between 7-methyl-GMP and the methyltransferase, whereas eukaryotic capping enzymes form a covalent complex only with GMP. Methyltransferase catalyzes transfer of a methyl group from S-adenosylmethionine to GTP and GDP to yield m(7)GTP or m(7)GDP. GDP is a better substrate than GTP. This enzyme also displays guanylyltransferase activity to form a covalent complex, methyltransferase-m(7)GMP, from which 7-methyl-GMP is transferred to the mRNA to create the cap structure. In terms of biological role, Y-domain: Indispensable for virus replication. Functionally, putative protease: The putative protease domain although necessary for replication of the virus may not be a protease but rather a structural Zn(2+)-binding domain. Inhibits induction of IFN-beta by MDA5 and RIG-I pathways and down-regulates the expression of MDA5. Its function is as follows. NTPase/helicase: Multi-functional protein that exhibits NTPase and RNA unwinding activities. Hydrolyzes all NTPs efficiently and unwinds RNA duplexes containing 5' overhangs. Possesses a sequence independent RNA-5'-triphosphatase (RTPase) activity suggestive of its role in forming viral cap structure. Also participates in viral genome replication, RNA translocation and genome packaging/unpackaging. RNA-directed RNA polymerase: Plays an essential role in the virus replication. Binds to the 3'-end of the genomic RNA to initiate viral replication. This chain is Non-structural polyprotein pORF1, found in Bandicota bengalensis (lesser bandicoot rat).